Reading from the N-terminus, the 124-residue chain is Small ribosomal subunit protein bS6 (124 aa).

Residues 96-124 (ETGPSPMMKEVQREEAKKAAAAQPTEAQA) form a disordered region. Positions 114–124 (AAAAQPTEAQA) are enriched in low complexity.

This sequence belongs to the bacterial ribosomal protein bS6 family.

Its function is as follows. Binds together with bS18 to 16S ribosomal RNA. The sequence is that of Small ribosomal subunit protein bS6 from Burkholderia lata (strain ATCC 17760 / DSM 23089 / LMG 22485 / NCIMB 9086 / R18194 / 383).